Reading from the N-terminus, the 316-residue chain is L-lactate dehydrogenase (316 aa).

NAD(+)-binding positions include valine 15, aspartate 37, lysine 42, tyrosine 68, and 82–83 (GL). Substrate contacts are provided by residues glutamine 85, arginine 91, and 123 to 126 (NPVD). NAD(+) is bound by residues 121-123 (ASN) and threonine 146. 151-154 (DTSR) serves as a coordination point for substrate. Arginine 156 and histidine 171 together coordinate beta-D-fructose 1,6-bisphosphate. The Proton acceptor role is filled by histidine 178. Tyrosine 222 is modified (phosphotyrosine). Substrate is bound at residue threonine 231.

It belongs to the LDH/MDH superfamily. LDH family. As to quaternary structure, homotetramer.

The protein localises to the cytoplasm. It carries out the reaction (S)-lactate + NAD(+) = pyruvate + NADH + H(+). It participates in fermentation; pyruvate fermentation to lactate; (S)-lactate from pyruvate: step 1/1. With respect to regulation, allosterically activated by fructose 1,6-bisphosphate (FBP). Catalyzes the conversion of lactate to pyruvate. In Borrelia turicatae (strain 91E135), this protein is L-lactate dehydrogenase.